The sequence spans 385 residues: 1-deoxy-D-xylulose 5-phosphate reductoisomerase (385 aa).

Residues Thr-11, Gly-12, Ser-13, Ile-14, Gln-39, and Asn-117 each coordinate NADPH. A 1-deoxy-D-xylulose 5-phosphate-binding site is contributed by Lys-118. Position 119 (Glu-119) interacts with NADPH. Asp-143 contacts Mn(2+). 1-deoxy-D-xylulose 5-phosphate contacts are provided by Ser-144, Glu-145, Ser-170, and His-193. A Mn(2+)-binding site is contributed by Glu-145. Gly-199 contributes to the NADPH binding site. Residues Ser-206, Asn-211, Lys-212, and Glu-215 each coordinate 1-deoxy-D-xylulose 5-phosphate. A Mn(2+)-binding site is contributed by Glu-215.

The protein belongs to the DXR family. Mg(2+) is required as a cofactor. The cofactor is Mn(2+).

The catalysed reaction is 2-C-methyl-D-erythritol 4-phosphate + NADP(+) = 1-deoxy-D-xylulose 5-phosphate + NADPH + H(+). It functions in the pathway isoprenoid biosynthesis; isopentenyl diphosphate biosynthesis via DXP pathway; isopentenyl diphosphate from 1-deoxy-D-xylulose 5-phosphate: step 1/6. Functionally, catalyzes the NADPH-dependent rearrangement and reduction of 1-deoxy-D-xylulose-5-phosphate (DXP) to 2-C-methyl-D-erythritol 4-phosphate (MEP). This is 1-deoxy-D-xylulose 5-phosphate reductoisomerase from Thermomicrobium roseum (strain ATCC 27502 / DSM 5159 / P-2).